The chain runs to 554 residues: CTP synthase (554 aa).

Residues 1–270 (MTKFVFVTGG…DGLICDKLRL (270 aa)) form an amidoligase domain region. Ser13 provides a ligand contact to CTP. Ser13 lines the UTP pocket. Residues 14 to 19 (SLGKGI) and Asp71 contribute to the ATP site. Residues Asp71 and Glu144 each contribute to the Mg(2+) site. CTP contacts are provided by residues 151 to 153 (DIE), 191 to 196 (KTKPTQ), and Lys227. UTP contacts are provided by residues 191 to 196 (KTKPTQ) and Lys227. A Glutamine amidotransferase type-1 domain is found at 295 to 548 (TVAMVGKYVD…IAAAKARHQA (254 aa)). Gly357 contacts L-glutamine. The active-site Nucleophile; for glutamine hydrolysis is the Cys384. L-glutamine contacts are provided by residues 385–388 (LGMQ), Glu408, and Arg474. Residues His521 and Glu523 contribute to the active site.

This sequence belongs to the CTP synthase family. Homotetramer.

It catalyses the reaction UTP + L-glutamine + ATP + H2O = CTP + L-glutamate + ADP + phosphate + 2 H(+). The enzyme catalyses L-glutamine + H2O = L-glutamate + NH4(+). The catalysed reaction is UTP + NH4(+) + ATP = CTP + ADP + phosphate + 2 H(+). The protein operates within pyrimidine metabolism; CTP biosynthesis via de novo pathway; CTP from UDP: step 2/2. Allosterically activated by GTP, when glutamine is the substrate; GTP has no effect on the reaction when ammonia is the substrate. The allosteric effector GTP functions by stabilizing the protein conformation that binds the tetrahedral intermediate(s) formed during glutamine hydrolysis. Inhibited by the product CTP, via allosteric rather than competitive inhibition. Catalyzes the ATP-dependent amination of UTP to CTP with either L-glutamine or ammonia as the source of nitrogen. Regulates intracellular CTP levels through interactions with the four ribonucleotide triphosphates. In Verminephrobacter eiseniae (strain EF01-2), this protein is CTP synthase.